We begin with the raw amino-acid sequence, 376 residues long: Lipid-A-disaccharide synthase (376 aa).

Belongs to the LpxB family.

The catalysed reaction is a lipid X + a UDP-2-N,3-O-bis[(3R)-3-hydroxyacyl]-alpha-D-glucosamine = a lipid A disaccharide + UDP + H(+). It participates in bacterial outer membrane biogenesis; LPS lipid A biosynthesis. Condensation of UDP-2,3-diacylglucosamine and 2,3-diacylglucosamine-1-phosphate to form lipid A disaccharide, a precursor of lipid A, a phosphorylated glycolipid that anchors the lipopolysaccharide to the outer membrane of the cell. The polypeptide is Lipid-A-disaccharide synthase (Hydrogenovibrio crunogenus (strain DSM 25203 / XCL-2) (Thiomicrospira crunogena)).